The sequence spans 207 residues: TM2 domain-containing protein 1 (207 aa).

The signal sequence occupies residues 1 to 37 (MAAAWPSGPSAPEAVTARLVGVLWFVSVTTGPWGAVA). Topologically, residues 40–128 (AGGEESLKCE…YSYKVAVALS (89 aa)) are extracellular. Residues Asn72, Asn75, Asn87, and Asn96 are each glycosylated (N-linked (GlcNAc...) asparagine). The TM2 domain maps to 118 to 166 (GYSYKVAVALSLFLGWLGADRFYLGYPALGLLKFCTVGFCGIGSLIDFI). A helical transmembrane segment spans residues 129 to 149 (LFLGWLGADRFYLGYPALGLL). At 150–153 (KFCT) the chain is on the cytoplasmic side. A helical transmembrane segment spans residues 154-174 (VGFCGIGSLIDFILISMQIVG). Over 175–207 (PSDGSSYIIDYYGTRLTRLSITNETFRKTQLYP) the chain is Extracellular. Asn197 carries an N-linked (GlcNAc...) asparagine glycan.

The protein belongs to the TM2 family. Interacts with APP beta-APP42 (amyloid-beta protein 42). In terms of processing, N-glycosylated. Widely expressed.

It is found in the membrane. In terms of biological role, may participate in amyloid-beta-induced apoptosis via its interaction with beta-APP42. The polypeptide is TM2 domain-containing protein 1 (TM2D1) (Homo sapiens (Human)).